The sequence spans 417 residues: Interferon-gamma-inducible GTPase 10 (417 aa).

Gly2 carries N-myristoyl glycine lipidation. Residues 67–249 (APLNIAVTGE…PSLESTLLEE (183 aa)) enclose the IRG-type G domain. The GDP site is built by Gly78, Ala79, Ser82, Thr83, Ser101, Lys183, Asp185, and Ser231. 2 helical membrane passes run 284-302 (EALKAGASATIPMMSFFND) and 370-387 (AVTGGFVATGLYFRKSYY).

Belongs to the TRAFAC class dynamin-like GTPase superfamily. GB1/RHD3 GTPase family. GB1 subfamily. As to quaternary structure, homooligomer; homooligomerization occurs upon GTP-binding and is required for the association with membranous structures. Homodimer; GDP-binding induces formation of an inactive head-to-head homodimer. Myristoylation is required for localization to pathogen-containing vacuoles. In terms of processing, (Microbial infection) Phosphorylated by Toxoplasma gondii ROP18.

It is found in the membrane. It localises to the cytoplasmic vesicle membrane. It catalyses the reaction GTP + H2O = GDP + phosphate + H(+). Functionally, interferon (IFN)-inducible GTPase that plays important roles in innate immunity against a diverse range of bacterial, viral and protozoan pathogens by mediating cytosolic release of pathogenic ligands that activate the inflammasomes. Following infection, recruited to the membrane of pathogens in a GBP-dependent manner and mediates disruption of the pathogen membrane, liberating ligands that are detected by inflammasomes, such as lipopolysaccharide (LPS) that activates the non-canonical CASP4/CASP11 inflammasome or double-stranded DNA (dsDNA) that activates the AIM2 inflammasome. Promotes AIM2 and NLRP3 inflammasome activation following A.fumigatus infection by liberating beta-glucan, which directly triggers inflammasome assembly. Promotes NLRP3 inflammasome activation following influenza A virus infection. This Mus musculus (Mouse) protein is Interferon-gamma-inducible GTPase 10.